The following is a 226-amino-acid chain: Putative pyridoxamine 5'-phosphate oxidase (226 aa).

16–19 (LNSH) provides a ligand contact to pyridoxal 5'-phosphate. 72–75 (RMVL) is an FMN binding site. Lys77 is a binding site for pyridoxal 5'-phosphate. Residues 87–88 (YT), 93–94 (RK), and Gln116 each bind FMN. Positions 134, 138, and 142 each coordinate pyridoxal 5'-phosphate. Residues 151–152 (QS) and Trp199 each bind FMN. 205-207 (RLH) lines the pyridoxal 5'-phosphate pocket. Arg209 is a binding site for FMN.

Belongs to the pyridoxamine 5'-phosphate oxidase family. As to quaternary structure, homodimer. Requires FMN as cofactor.

The catalysed reaction is pyridoxamine 5'-phosphate + O2 + H2O = pyridoxal 5'-phosphate + H2O2 + NH4(+). The enzyme catalyses pyridoxine 5'-phosphate + O2 = pyridoxal 5'-phosphate + H2O2. It participates in cofactor metabolism; pyridoxal 5'-phosphate salvage; pyridoxal 5'-phosphate from pyridoxamine 5'-phosphate: step 1/1. The protein operates within cofactor metabolism; pyridoxal 5'-phosphate salvage; pyridoxal 5'-phosphate from pyridoxine 5'-phosphate: step 1/1. Functionally, catalyzes the oxidation of either pyridoxine 5'-phosphate (PNP) or pyridoxamine 5'-phosphate (PMP) into pyridoxal 5'-phosphate (PLP). This is Putative pyridoxamine 5'-phosphate oxidase from Caenorhabditis elegans.